Here is a 106-residue protein sequence, read N- to C-terminus: Iron-sulfur cluster assembly protein CyaY (106 aa).

The protein belongs to the frataxin family.

In terms of biological role, involved in iron-sulfur (Fe-S) cluster assembly. May act as a regulator of Fe-S biogenesis. The chain is Iron-sulfur cluster assembly protein CyaY from Shigella flexneri serotype 5b (strain 8401).